A 392-amino-acid chain; its full sequence is O-phospho-L-seryl-tRNA:Cys-tRNA synthase 1 (392 aa).

Residues 85–86 (AR), asparagine 190, and 213–215 (SGH) each bind pyridoxal 5'-phosphate. The residue at position 216 (lysine 216) is an N6-(pyridoxal phosphate)lysine.

This sequence belongs to the SepCysS family. In terms of assembly, homodimer. Interacts with SepRS. Pyridoxal 5'-phosphate serves as cofactor.

It catalyses the reaction O-phospho-L-seryl-tRNA(Cys) + hydrogen sulfide + H(+) = L-cysteinyl-tRNA(Cys) + phosphate. Converts O-phospho-L-seryl-tRNA(Cys) (Sep-tRNA(Cys)) to L-cysteinyl-tRNA(Cys) (Cys-tRNA(Cys)). This chain is O-phospho-L-seryl-tRNA:Cys-tRNA synthase 1, found in Methanoregula boonei (strain DSM 21154 / JCM 14090 / 6A8).